A 240-amino-acid chain; its full sequence is Venom hemolysin-like protein 1 (240 aa).

Residues Met1–Ala18 form the signal peptide. The tract at residues Glu25–Thr50 is disordered. Residues Thr39–Thr50 show a composition bias toward polar residues.

In terms of tissue distribution, expressed by the venom gland (anterior main gland) (at protein level).

Its subcellular location is the secreted. This Platymeris rhadamanthus (Red spot assassin bug) protein is Venom hemolysin-like protein 1.